A 438-amino-acid chain; its full sequence is Cyanidin-3-O-glucoside 2-O-glucuronosyltransferase (438 aa).

UDP-alpha-D-glucuronate contacts are provided by residues Ser-264, 315-316, 333-341, and 355-358; these read WV, HCGWSSTME, and QFDQ.

Belongs to the UDP-glycosyltransferase family. In terms of assembly, monomer. In terms of tissue distribution, expressed in petals. Not detected in sepals, stems, leaves, tubular corollas and white petals.

It is found in the cytoplasm. It catalyses the reaction cyanidin 3-O-beta-D-glucoside + UDP-alpha-D-glucuronate = cyanidin 3-O-(2-O-beta-D-glucuronosyl)-beta-D-glucoside + UDP + H(+). With respect to regulation, inhibited by copper, mercury, UDP, UTP and partially by calcium, cadmium, iron and UMP. Not affected by cobalt, magnesium, manganese, zinc, nickel, tin, uridine, sadium malonate and glucose. Functionally, involved in the production of glucuronosylated anthocyanins that are the origin of the red coloration of flowers. Can use cyanidin 3-O-6''-O-malonylglucoside, cyanidin 3-O-glucoside and delphinidin 3-O-glucosideas substrates, but not pelargonidin 3-O-glucoside, cyanidin 3-O-3'',6''-O-dimalonylglucoside, pelargonidin 3,5-O-diglucoside, pelargonidin 3-O-6''-O-malonylglucoside-5-O-glucoside, quercetin 3-O-glucoside, quercetin 3-O-6''-O-malonylglucoside, daidzin, genistin,7-O-6''-O-malonylglucosides of daidzein and genistein, cyanidin, quercetin, daidzein, genistein p-Nitrophenyl beta-D-glucopyranoside, beta-estradiol, 17alpha-estradiol, 1-naphthol, 2-naphthol, 4-methylumbelliferone, and p-nitrophenol. Highly specific for UDP-glucuronate (UDP-GlcUA). Arg-25 is decisive with respect to UDP-sugar specificity. In Bellis perennis (English daisy), this protein is Cyanidin-3-O-glucoside 2-O-glucuronosyltransferase (UGAT).